Here is a 933-residue protein sequence, read N- to C-terminus: Serine/threonine-protein kinase PknD (933 aa).

Residues 4 to 291 (YDIIRMIGKG…ALKADIEQHL (288 aa)) form the Protein kinase domain. Residues 10 to 18 (IGKGGMGEV) and Lys-33 contribute to the ATP site. The active-site Proton acceptor is the Asp-138.

The protein belongs to the protein kinase superfamily. Ser/Thr protein kinase family. In terms of processing, autophosphorylated on serine and threonine residues.

It carries out the reaction L-seryl-[protein] + ATP = O-phospho-L-seryl-[protein] + ADP + H(+). The enzyme catalyses L-threonyl-[protein] + ATP = O-phospho-L-threonyl-[protein] + ADP + H(+). In terms of biological role, together with the serine/threonine kinase Pkn1, may play a role in the specific interactions with host proteins during intracellular growth. This chain is Serine/threonine-protein kinase PknD, found in Chlamydia abortus (strain DSM 27085 / S26/3) (Chlamydophila abortus).